The following is a 589-amino-acid chain: V-type ATP synthase alpha chain 1 (589 aa).

Residue 239-246 (GPFGAGKT) coordinates ATP.

The protein belongs to the ATPase alpha/beta chains family.

The catalysed reaction is ATP + H2O + 4 H(+)(in) = ADP + phosphate + 5 H(+)(out). Its function is as follows. Produces ATP from ADP in the presence of a proton gradient across the membrane. The V-type alpha chain is a catalytic subunit. The sequence is that of V-type ATP synthase alpha chain 1 (atpA1) from Treponema pallidum (strain Nichols).